The primary structure comprises 144 residues: Large ribosomal subunit protein uL24 (144 aa).

The segment at 102–144 (NIVVEKPEPEPEPRKEETAEAQEAKEEAVAEEKTEVDDNDKQN) is disordered. A compositionally biased stretch (basic and acidic residues) spans 103 to 134 (IVVEKPEPEPEPRKEETAEAQEAKEEAVAEEK). Positions 135–144 (TEVDDNDKQN) are enriched in acidic residues.

Belongs to the universal ribosomal protein uL24 family. As to quaternary structure, part of the 50S ribosomal subunit.

In terms of biological role, one of two assembly initiator proteins, it binds directly to the 5'-end of the 23S rRNA, where it nucleates assembly of the 50S subunit. Functionally, located at the polypeptide exit tunnel on the outside of the subunit. The sequence is that of Large ribosomal subunit protein uL24 (rpl24) from Thermoplasma acidophilum (strain ATCC 25905 / DSM 1728 / JCM 9062 / NBRC 15155 / AMRC-C165).